Consider the following 763-residue polypeptide: Amine oxidase [copper-containing] 3 (763 aa).

Residues 2–6 lie on the Cytoplasmic side of the membrane; that stretch reads TQKTT. A helical; Signal-anchor for type II membrane protein membrane pass occupies residues 7–27; the sequence is LVLLALAVITIFALVCVLLAG. Residues 28 to 763 are Extracellular-facing; sequence RSGDGGRLSQ…AFSHGGFTYK (736 aa). A glycan (N-linked (GlcNAc...) asparagine) is linked at Asn-137. Residues Cys-198 and Cys-199 are joined by a disulfide bond. 2 N-linked (GlcNAc...) asparagine glycosylation sites follow: Asn-232 and Asn-294. Catalysis depends on Asp-386, which acts as the Proton acceptor. A disulfide bridge connects residues Cys-404 and Cys-430. Tyr-471 acts as the Schiff-base intermediate with substrate; via topaquinone in catalysis. The residue at position 471 (Tyr-471) is a 2',4',5'-topaquinone. The Cu(2+) site is built by His-520 and His-522. Asp-529, Leu-530, Asp-531, and Glu-572 together coordinate Ca(2+). N-linked (GlcNAc...) asparagine glycosylation is found at Asn-581 and Asn-592. Residues Glu-641 and Phe-663 each contribute to the Ca(2+) site. The N-linked (GlcNAc...) asparagine glycan is linked to Asn-666. Residues Glu-667, Asp-673, and Leu-674 each contribute to the Ca(2+) site. His-684 is a binding site for Cu(2+). Residues Cys-734 and Cys-741 are joined by a disulfide bond.

Belongs to the copper/topaquinone oxidase family. As to quaternary structure, homodimer; disulfide-linked. Probably forms heterodimers with AOC2. The cofactor is Cu(2+). Ca(2+) serves as cofactor. Requires L-topaquinone as cofactor. In terms of processing, topaquinone (TPQ) is generated by copper-dependent autoxidation of a specific tyrosyl residue. N- and O-glycosylated. In terms of tissue distribution, highly expressed in adipocytes, aorta and lung. Expressed at lower levels in heart, kidney, large intestine, liver, small intestine and stomach.

It localises to the cell membrane. The catalysed reaction is methylamine + O2 + H2O = formaldehyde + H2O2 + NH4(+). It carries out the reaction benzylamine + O2 + H2O = benzaldehyde + H2O2 + NH4(+). It catalyses the reaction 2-phenylethylamine + O2 + H2O = 2-phenylacetaldehyde + H2O2 + NH4(+). Its function is as follows. Catalyzes the oxidative deamination of primary amines to the corresponding aldehydes with the concomitant production of hydrogen peroxide and ammonia. Has a preference for the primary monoamines methylamine and benzylamine. Could also act on 2-phenylethylamine but much less efficiently. At endothelial cells surface can also function as a cell adhesion protein that participates in lymphocyte extravasation and recirculation by mediating the binding of lymphocytes to peripheral lymph node vascular endothelial cells in an L-selectin-independent fashion. The protein is Amine oxidase [copper-containing] 3 of Rattus norvegicus (Rat).